We begin with the raw amino-acid sequence, 196 residues long: Proteasome subunit beta (196 aa).

A propeptide (removed in mature form; by autocatalysis) is located at residue M1. Catalysis depends on T2, which acts as the Nucleophile.

The protein belongs to the peptidase T1B family. As to quaternary structure, the 20S proteasome core is composed of 14 alpha and 14 beta subunits that assemble into four stacked heptameric rings, resulting in a barrel-shaped structure. The two inner rings, each composed of seven catalytic beta subunits, are sandwiched by two outer rings, each composed of seven alpha subunits. The catalytic chamber with the active sites is on the inside of the barrel. Has a gated structure, the ends of the cylinder being occluded by the N-termini of the alpha-subunits. Is capped at one or both ends by the proteasome regulatory ATPase, PAN.

The protein resides in the cytoplasm. The catalysed reaction is Cleavage of peptide bonds with very broad specificity.. Its activity is regulated as follows. The formation of the proteasomal ATPase PAN-20S proteasome complex, via the docking of the C-termini of PAN into the intersubunit pockets in the alpha-rings, triggers opening of the gate for substrate entry. Interconversion between the open-gate and close-gate conformations leads to a dynamic regulation of the 20S proteasome proteolysis activity. Functionally, component of the proteasome core, a large protease complex with broad specificity involved in protein degradation. This is Proteasome subunit beta from Nanoarchaeum equitans (strain Kin4-M).